The primary structure comprises 352 residues: MVFRIASSPYTHNQRQTSRIMLLVLLAAVPGIAAQLRFFGWGTLVQILLASVSALLAEALVLKLRKQSVAATLKDNSALLTGLLLAVSIPPLAPWWMVVLGTVFAVIIAKQLYGGLGQNPFNPAMIGYVVLLISFPVQMTSWLPPHEIAVNIPGFIDAIQVIFSGHTASGGDMNTLRLGIDGISQATPLDTFKTSVRAGHSVEQIMQYPIYSGILAGAGWQWVNLAWLAGGVWLLWQKAIRWHIPLSFLVTLALCATLGWLFSPETLAAPQIHLLSGATMLGAFFILTDPVTASTTNRGRLMFGALAGLLVWLIRSFGGYPDGVAFAVLLANITVPLIDYYTRPRVYGHRKG.

Transmembrane regions (helical) follow at residues 20–40 (IMLL…RFFG), 42–62 (GTLV…ALVL), 78–109 (ALLT…VIIA), 123–143 (PAMI…TSWL), and 148–168 (IAVN…GHTA). FMN phosphoryl threonine is present on T187. 4 consecutive transmembrane segments (helical) span residues 214 to 234 (ILAG…GVWL), 242 to 262 (WHIP…GWLF), 267 to 287 (LAAP…FFIL), and 301 to 318 (LMFG…RSFG).

The protein belongs to the NqrB/RnfD family. As to quaternary structure, the complex is composed of six subunits: RsxA, RsxB, RsxC, RsxD, RsxE and RsxG. The cofactor is FMN.

The protein resides in the cell inner membrane. Its function is as follows. Part of a membrane-bound complex that couples electron transfer with translocation of ions across the membrane. Required to maintain the reduced state of SoxR. The sequence is that of Ion-translocating oxidoreductase complex subunit D from Shigella flexneri.